We begin with the raw amino-acid sequence, 88 residues long: Large ribosomal subunit protein bL27 (88 aa).

The segment at 1–24 (MATKKSGGSSGNGRDSRGRRLGVK) is disordered.

The protein belongs to the bacterial ribosomal protein bL27 family.

The protein is Large ribosomal subunit protein bL27 of Ehrlichia canis (strain Jake).